Reading from the N-terminus, the 207-residue chain is MTGRLKLVLASGSPRRLSLLNQAGIDPDALRPADVDETPERGELPRACANRLARAKADATLKAVQLDDDLRGSFILAADTVVAVGRRILPKADLADEASQCLRLLSGRNHRVYTAVCLVTPKGNCRQRLIETRVRFKRLTEEDIRGYVGSGEWRGKAGGYAVQGIAGSFVVKLVGSYTNVVGLPLYESVSLLGGEGFPIRSGWLNAG.

Residue aspartate 79 is the Proton acceptor of the active site.

It belongs to the Maf family. YhdE subfamily. It depends on a divalent metal cation as a cofactor.

The protein resides in the cytoplasm. The enzyme catalyses dTTP + H2O = dTMP + diphosphate + H(+). It carries out the reaction UTP + H2O = UMP + diphosphate + H(+). Functionally, nucleoside triphosphate pyrophosphatase that hydrolyzes dTTP and UTP. May have a dual role in cell division arrest and in preventing the incorporation of modified nucleotides into cellular nucleic acids. This is dTTP/UTP pyrophosphatase from Nitrobacter hamburgensis (strain DSM 10229 / NCIMB 13809 / X14).